The sequence spans 472 residues: MSEFPFEISPMFEGERVRKEGMFVELGGPKSLGLELVRAKPMDEIEDGKVTIVGPDLKDMEEGKTYPWAMIFHVGGELVEPDLESVIERRVHDFINYCQGIMHLNQRYDVWMRISKDTAAKMDSFEPFGKAVMMLFKTELPFIEKMQVTFYTDQAEVEKQMAEAMEIFKARDARTKDLHDEDVDVFYGCTLCQSFAPTNVCVVSPDRVSLCGAINWFDGRAAAKVDPEGPQFAIEKGELLDAKTGEYSGVNEVAKKLSSGEFDKIKLHSFFDAPHTSCGCFEVVGFYIPEVDGIGWVNREYQGMAPNGLGFSTMAGQTGGGKQIVGFLGIGINYFYSPKFIQADGGWNRVVWLPSMLKEKIDEAIPDDMKDKIATEKDVTDIESLKTFLKEKNHPVVANWAAEAEEEEEEEEEEEEVAAEAAPMMMPAAGFQMPAMPAMPMMSGGAGGIKLTFKNAKITIDRMIISEKKEKK.

[Ni-Fe-S] cluster-binding residues include cysteine 189, cysteine 192, cysteine 278, and cysteine 280.

It belongs to the CdhC family. In terms of assembly, monomer. The ACDS complex is made up of alpha, epsilon, beta, gamma and delta chains with a probable stoichiometry of (alpha(2)epsilon(2))(4)-beta(8)-(gamma(1)delta(1))(8) (Potential). [Ni-Fe-S] cluster serves as cofactor.

It catalyses the reaction Co(I)-[corrinoid Fe-S protein] + acetyl-CoA + H(+) = methyl-Co(III)-[corrinoid Fe-S protein] + CO + CoA. Its pathway is one-carbon metabolism; methanogenesis from acetate. Its function is as follows. Part of a complex that catalyzes the reversible cleavage of acetyl-CoA, allowing growth on acetate as sole source of carbon and energy. The alpha-epsilon complex generates CO from CO(2), while the beta subunit (this protein) combines the CO with CoA and a methyl group to form acetyl-CoA. The methyl group, which is incorporated into acetyl-CoA, is transferred to the beta subunit by a corrinoid iron-sulfur protein (the gamma-delta complex). This is Acetyl-CoA decarbonylase/synthase complex subunit beta 2 (cdhC2) from Methanosarcina thermophila.